The primary structure comprises 55 residues: Transcriptional regulator CdrS (55 aa).

It belongs to the CdrS family.

The protein localises to the cytoplasm. Its function is as follows. Transcriptional regulator which plays a central role in the regulation of cell division. Activates the expression of the gene encoding the cell division protein FtsZ2, and of other genes encoding proteins predicted to function in critical aspects of cell division. Required for normal cell division but not for cell elongation. May act during the transition from stasis to growth. The CdrSL-FtsZ2 transcriptional network might coordinate cell division timing with cell growth. The polypeptide is Transcriptional regulator CdrS (Halobacterium salinarum (strain ATCC 700922 / JCM 11081 / NRC-1) (Halobacterium halobium)).